The chain runs to 155 residues: SsrA-binding protein (155 aa).

It belongs to the SmpB family.

Its subcellular location is the cytoplasm. Functionally, required for rescue of stalled ribosomes mediated by trans-translation. Binds to transfer-messenger RNA (tmRNA), required for stable association of tmRNA with ribosomes. tmRNA and SmpB together mimic tRNA shape, replacing the anticodon stem-loop with SmpB. tmRNA is encoded by the ssrA gene; the 2 termini fold to resemble tRNA(Ala) and it encodes a 'tag peptide', a short internal open reading frame. During trans-translation Ala-aminoacylated tmRNA acts like a tRNA, entering the A-site of stalled ribosomes, displacing the stalled mRNA. The ribosome then switches to translate the ORF on the tmRNA; the nascent peptide is terminated with the 'tag peptide' encoded by the tmRNA and targeted for degradation. The ribosome is freed to recommence translation, which seems to be the essential function of trans-translation. In Bacillus cereus (strain 03BB102), this protein is SsrA-binding protein.